The chain runs to 455 residues: Putative FBD-associated F-box protein At5g56400 (455 aa).

The 50-residue stretch at 32 to 81 (VDKISDLPEDLLVHILSLLPTTNDIVATSGVSKRWESLWTKVHKLRFNDR) folds into the F-box domain. Residues 372–421 (WNQQPSYVPECLTKSLEIFEWRNYKATFRERDVAVYILKNSTCLKKTVIS) enclose the FBD domain.

This is Putative FBD-associated F-box protein At5g56400 from Arabidopsis thaliana (Mouse-ear cress).